A 299-amino-acid polypeptide reads, in one-letter code: CDP-abequose synthase (299 aa).

Substrate is bound at residue threonine 117. The active-site Proton acceptor is tyrosine 134.

Belongs to the NAD(P)-dependent epimerase/dehydratase family.

The catalysed reaction is CDP-alpha-D-abequose + NADP(+) = CDP-4-dehydro-3,6-dideoxy-alpha-D-glucose + NADPH + H(+). Its pathway is bacterial outer membrane biogenesis; LPS O-antigen biosynthesis. In Salmonella typhimurium (strain LT2 / SGSC1412 / ATCC 700720), this protein is CDP-abequose synthase (rfbJ).